A 79-amino-acid polypeptide reads, in one-letter code: Acyl carrier protein (79 aa).

The region spanning 4-79 is the Carrier domain; it reads EQILVDVQEA…DVVAYIETKL (76 aa). S39 bears the O-(pantetheine 4'-phosphoryl)serine mark.

This sequence belongs to the acyl carrier protein (ACP) family. In terms of processing, 4'-phosphopantetheine is transferred from CoA to a specific serine of apo-ACP by AcpS. This modification is essential for activity because fatty acids are bound in thioester linkage to the sulfhydryl of the prosthetic group.

The protein resides in the cytoplasm. It functions in the pathway lipid metabolism; fatty acid biosynthesis. Functionally, carrier of the growing fatty acid chain in fatty acid biosynthesis. In Exiguobacterium sp. (strain ATCC BAA-1283 / AT1b), this protein is Acyl carrier protein.